The sequence spans 228 residues: Lipoprotein-releasing system ATP-binding protein LolD (228 aa).

In terms of domain architecture, ABC transporter spans 5–228 (LRCHQVCKTY…DGLLTDITGA (224 aa)). 41–48 (GSSGSGKS) contacts ATP.

It belongs to the ABC transporter superfamily. Lipoprotein translocase (TC 3.A.1.125) family. In terms of assembly, the complex is composed of two ATP-binding proteins (LolD) and two transmembrane proteins (LolC and LolE).

Its subcellular location is the cell inner membrane. In terms of biological role, part of the ABC transporter complex LolCDE involved in the translocation of mature outer membrane-directed lipoproteins, from the inner membrane to the periplasmic chaperone, LolA. Responsible for the formation of the LolA-lipoprotein complex in an ATP-dependent manner. This Vibrio cholerae serotype O1 (strain ATCC 39315 / El Tor Inaba N16961) protein is Lipoprotein-releasing system ATP-binding protein LolD.